Reading from the N-terminus, the 545-residue chain is MTKLTQQDAWAQLEAQAAKLPHMRELFEADPQRFDKMSLSACGLLLDYSKNRADEQTLEQLFKLAKSAGLSDKIHAMFDGEIINNTEKRAVLHTALRAEADEVILVDGQNIVPEVKQTQAKMAKFVEAVTSGEWKGYTGKAITDIVSIGIGGSFLGPKIVTQALRPYWNPALKCHFVANVDATSLCEKLRLVDPETTLFVMSSKSFGTQETLTNTLSAKAWFLKNGGTQVDIAKHFVAVTSNVAKATEFGMDADNIFPMWDWVGGRYSLWSAIGLPIALLIGMDNFYQLLAGAKSMDKHFVEAPLEQNMPVIMGLFSLLYGNFYQAQSHVVLTYDHYLRGLPAYFQQLDMESNGKSVTLNGDNVDHATGPVIWGGEGTNGQHAYHQLLHQGTALIPADFILPLQSHNPLGEHHVQLASNCFGQTQALMQGRTFDEALAELDGSSQSQEEKALIAKHKVMEGNKPSNTLLMDKLTPETLGALIALYEHRTFVQGAIWDINSFDQWGVELGKTLGNDVLARLQSDEEAKALDASSNALINLFRRGHL.

E351 functions as the Proton donor in the catalytic mechanism. Residues H382 and K510 contribute to the active site.

Belongs to the GPI family.

Its subcellular location is the cytoplasm. It carries out the reaction alpha-D-glucose 6-phosphate = beta-D-fructose 6-phosphate. It participates in carbohydrate biosynthesis; gluconeogenesis. It functions in the pathway carbohydrate degradation; glycolysis; D-glyceraldehyde 3-phosphate and glycerone phosphate from D-glucose: step 2/4. Functionally, catalyzes the reversible isomerization of glucose-6-phosphate to fructose-6-phosphate. The chain is Glucose-6-phosphate isomerase from Shewanella loihica (strain ATCC BAA-1088 / PV-4).